Reading from the N-terminus, the 162-residue chain is Phosphopantetheine adenylyltransferase (162 aa).

Ser-11 contributes to the substrate binding site. Residues 11-12 (SF) and His-19 contribute to the ATP site. The substrate site is built by Lys-43, Val-76, and Arg-90. ATP contacts are provided by residues 91 to 93 (GLR), Glu-101, and 126 to 132 (HLYISSS).

It belongs to the bacterial CoaD family. Homohexamer. Mg(2+) is required as a cofactor.

It is found in the cytoplasm. It catalyses the reaction (R)-4'-phosphopantetheine + ATP + H(+) = 3'-dephospho-CoA + diphosphate. The protein operates within cofactor biosynthesis; coenzyme A biosynthesis; CoA from (R)-pantothenate: step 4/5. In terms of biological role, reversibly transfers an adenylyl group from ATP to 4'-phosphopantetheine, yielding dephospho-CoA (dPCoA) and pyrophosphate. In Streptococcus pneumoniae (strain JJA), this protein is Phosphopantetheine adenylyltransferase.